A 469-amino-acid polypeptide reads, in one-letter code: 3-isopropylmalate dehydratase large subunit (469 aa).

The [4Fe-4S] cluster site is built by Cys350, Cys410, and Cys413.

This sequence belongs to the aconitase/IPM isomerase family. LeuC type 1 subfamily. As to quaternary structure, heterodimer of LeuC and LeuD. It depends on [4Fe-4S] cluster as a cofactor.

The enzyme catalyses (2R,3S)-3-isopropylmalate = (2S)-2-isopropylmalate. It functions in the pathway amino-acid biosynthesis; L-leucine biosynthesis; L-leucine from 3-methyl-2-oxobutanoate: step 2/4. Its function is as follows. Catalyzes the isomerization between 2-isopropylmalate and 3-isopropylmalate, via the formation of 2-isopropylmaleate. This is 3-isopropylmalate dehydratase large subunit from Brucella melitensis biotype 2 (strain ATCC 23457).